A 704-amino-acid polypeptide reads, in one-letter code: Ion-translocating oxidoreductase complex subunit C (704 aa).

4Fe-4S ferredoxin-type domains are found at residues 368–397 (MGAP…QQLY) and 407–436 (KATA…VQYF). [4Fe-4S] cluster-binding residues include Cys-377, Cys-380, Cys-383, Cys-387, Cys-416, Cys-419, Cys-422, and Cys-426. The segment at 535–684 (ARAKQAAHPM…PADPRKAAVA (150 aa)) is disordered. Positions 556 to 565 (KAAVEAAIAR) are enriched in low complexity.

Belongs to the 4Fe4S bacterial-type ferredoxin family. RnfC subfamily. As to quaternary structure, the complex is composed of six subunits: RsxA, RsxB, RsxC, RsxD, RsxE and RsxG. The cofactor is [4Fe-4S] cluster.

It localises to the cell inner membrane. Its function is as follows. Part of a membrane-bound complex that couples electron transfer with translocation of ions across the membrane. Required to maintain the reduced state of SoxR. In Salmonella paratyphi C (strain RKS4594), this protein is Ion-translocating oxidoreductase complex subunit C.